The sequence spans 640 residues: ATP-dependent DNA helicase YoaA (640 aa).

Positions 16–278 constitute a Helicase ATP-binding domain; the sequence is ELSQNIKGFR…KDMQQLGTTS (263 aa). Position 51-58 (51-58) interacts with ATP; the sequence is AGTGTGKT. Position 114 (Cys-114) interacts with [4Fe-4S] cluster. Positions 125–128 match the DEAH box motif; it reads GVLG. Cys-174, Cys-179, and Cys-185 together coordinate [4Fe-4S] cluster. The DEAH box signature appears at 231–234; the sequence is DEAH. The 177-residue stretch at 458 to 634 folds into the Helicase C-terminal domain; that stretch reads SLGEILLPVI…SRTRDLNKVI (177 aa).

Belongs to the helicase family. DinG subfamily. [4Fe-4S] cluster is required as a cofactor.

It catalyses the reaction Couples ATP hydrolysis with the unwinding of duplex DNA at the replication fork by translocating in the 5'-3' direction. This creates two antiparallel DNA single strands (ssDNA). The leading ssDNA polymer is the template for DNA polymerase III holoenzyme which synthesizes a continuous strand.. The catalysed reaction is ATP + H2O = ADP + phosphate + H(+). In terms of biological role, probably a 5'-3' DNA helicase. This chain is ATP-dependent DNA helicase YoaA, found in Haemophilus influenzae (strain ATCC 51907 / DSM 11121 / KW20 / Rd).